The primary structure comprises 65 residues: Large ribosomal subunit protein bL32 (65 aa).

It belongs to the bacterial ribosomal protein bL32 family.

In Rickettsia prowazekii (strain Madrid E), this protein is Large ribosomal subunit protein bL32 (rpmF).